The following is a 98-amino-acid chain: NADH-ubiquinone oxidoreductase chain 4L (98 aa).

3 helical membrane-spanning segments follow: residues 2–22, 29–49, and 61–81; these read PSIS…MLIF, SLLC…LTIL, and ILLL…LVTV.

The protein belongs to the complex I subunit 4L family. As to quaternary structure, core subunit of respiratory chain NADH dehydrogenase (Complex I) which is composed of 45 different subunits.

Its subcellular location is the mitochondrion inner membrane. The catalysed reaction is a ubiquinone + NADH + 5 H(+)(in) = a ubiquinol + NAD(+) + 4 H(+)(out). Functionally, core subunit of the mitochondrial membrane respiratory chain NADH dehydrogenase (Complex I) which catalyzes electron transfer from NADH through the respiratory chain, using ubiquinone as an electron acceptor. Part of the enzyme membrane arm which is embedded in the lipid bilayer and involved in proton translocation. The chain is NADH-ubiquinone oxidoreductase chain 4L (MT-ND4L) from Lemur catta (Ring-tailed lemur).